Here is a 60-residue protein sequence, read N- to C-terminus: Cytotoxin 2 (60 aa).

Cystine bridges form between Cys-3–Cys-21, Cys-14–Cys-38, Cys-42–Cys-53, and Cys-54–Cys-59.

It belongs to the three-finger toxin family. Short-chain subfamily. Type IA cytotoxin sub-subfamily. Monomer in solution; Homodimer and oligomer in the presence of negatively charged lipids forming a pore with a size ranging between 20 and 30 Angstroms. As to expression, expressed by the venom gland.

The protein localises to the secreted. Its subcellular location is the target cell membrane. In terms of biological role, shows cytolytic activity on many different cells by forming pore in lipid membranes. In vivo, increases heart rate or kills the animal by cardiac arrest. In addition, it binds to heparin with high affinity, interacts with Kv channel-interacting protein 1 (KCNIP1) in a calcium-independent manner, and binds to integrin alpha-V/beta-3 (ITGAV/ITGB3) with moderate affinity. This Naja mossambica (Mozambique spitting cobra) protein is Cytotoxin 2.